The primary structure comprises 318 residues: Ribosomal RNA small subunit methyltransferase H (318 aa).

S-adenosyl-L-methionine is bound by residues Ala38 to His40, Asp57, Leu91, Asp105, and Gln112.

Belongs to the methyltransferase superfamily. RsmH family.

It localises to the cytoplasm. It carries out the reaction cytidine(1402) in 16S rRNA + S-adenosyl-L-methionine = N(4)-methylcytidine(1402) in 16S rRNA + S-adenosyl-L-homocysteine + H(+). Specifically methylates the N4 position of cytidine in position 1402 (C1402) of 16S rRNA. This Clavibacter michiganensis subsp. michiganensis (strain NCPPB 382) protein is Ribosomal RNA small subunit methyltransferase H.